A 188-amino-acid polypeptide reads, in one-letter code: UPF0301 protein PsycPRwf_0144 (188 aa).

The protein belongs to the UPF0301 (AlgH) family.

The protein is UPF0301 protein PsycPRwf_0144 of Psychrobacter sp. (strain PRwf-1).